Here is a 316-residue protein sequence, read N- to C-terminus: Pantothenate kinase (316 aa).

An ATP-binding site is contributed by 95–102; it reads GSVAVGKS.

The protein belongs to the prokaryotic pantothenate kinase family.

It is found in the cytoplasm. The catalysed reaction is (R)-pantothenate + ATP = (R)-4'-phosphopantothenate + ADP + H(+). It functions in the pathway cofactor biosynthesis; coenzyme A biosynthesis; CoA from (R)-pantothenate: step 1/5. The polypeptide is Pantothenate kinase (Serratia proteamaculans (strain 568)).